The primary structure comprises 564 residues: MRSDLDIAQAARLRPIRAVAADLGLTDDDIELYGRSIAKIDLGILQRLTDQPRGRYIVVTAITPTPLGEGKTTTTIGLGQALARLGKRSVVTIRQPSMGPTFGIKGGAAGGGYSQVLPMEQFNLHLTGDIHAIGAAHNLLAAMIDNHLHHGNQCGIDPYAIFWSRVVDISDRVLRNVVVGLGKKEDGPMRQTQFDITVASEVMAILALTTNLHDLRQRLGRIVAAYTRDGAPVTAEDLHAAGAMTVLLKEAIKPNLLQTLEGSPALVHCGPFANIAHGASSVLADMIGLHCADYVVTESGFGADIGFEKFCDIKCRASGLAPDAVVLVATVRALKAHSGRYTITAGRPLDPRLAEENPEDVADGAANLAAQVRIARLFGRPVVVAINRFPDDFPSEVEVIRQVARESGAFDVVESFVFAEGGAGGCDLARAAIQACEAPGTFTPLYPLDMSLREKIETLATKVYGATRVEYTPEASRRLAQFEHQGYGNLPICMAKTHLSISHDPKLRGAPSGYVFPIRDVRLAAGAGFIYPLAGDIRTMPGLPAHPAAERIDIDAEGRTRGLS.

ATP is bound at residue 65–72; that stretch reads TPLGEGKT.

This sequence belongs to the formate--tetrahydrofolate ligase family.

It catalyses the reaction (6S)-5,6,7,8-tetrahydrofolate + formate + ATP = (6R)-10-formyltetrahydrofolate + ADP + phosphate. It functions in the pathway one-carbon metabolism; tetrahydrofolate interconversion. The sequence is that of Formate--tetrahydrofolate ligase from Roseiflexus castenholzii (strain DSM 13941 / HLO8).